Reading from the N-terminus, the 648-residue chain is 60 kDa heat shock protein homolog 1, mitochondrial (648 aa).

Residues methionine 1–serine 55 constitute a mitochondrion transit peptide.

The protein belongs to the chaperonin (HSP60) family.

It localises to the mitochondrion matrix. In terms of biological role, prevents misfolding and promotes the refolding and proper assembly of unfolded polypeptides generated under stress conditions. In Drosophila melanogaster (Fruit fly), this protein is 60 kDa heat shock protein homolog 1, mitochondrial (Hsp60B).